The sequence spans 404 residues: S-adenosylmethionine synthase (404 aa).

The span at 1-13 (MSHSRYFFTSESV) shows a compositional bias: polar residues. The segment at 1–20 (MSHSRYFFTSESVSEGHPDK) is disordered. ATP is bound at residue His-17. Residue Asp-19 coordinates Mg(2+). Glu-45 contacts K(+). L-methionine-binding residues include Glu-58 and Gln-101. The segment at 101–111 (QSPDINRGVDR) is flexible loop. ATP-binding positions include 172–174 (DSK), 246–247 (RF), Asp-255, 261–262 (RK), Ala-278, and Lys-282. Residue Asp-255 participates in L-methionine binding. Residue Lys-286 coordinates L-methionine.

It belongs to the AdoMet synthase family. In terms of assembly, homotetramer; dimer of dimers. It depends on Mg(2+) as a cofactor. K(+) is required as a cofactor.

It localises to the cytoplasm. The enzyme catalyses L-methionine + ATP + H2O = S-adenosyl-L-methionine + phosphate + diphosphate. It functions in the pathway amino-acid biosynthesis; S-adenosyl-L-methionine biosynthesis; S-adenosyl-L-methionine from L-methionine: step 1/1. Functionally, catalyzes the formation of S-adenosylmethionine (AdoMet) from methionine and ATP. The overall synthetic reaction is composed of two sequential steps, AdoMet formation and the subsequent tripolyphosphate hydrolysis which occurs prior to release of AdoMet from the enzyme. In Chlorobaculum parvum (strain DSM 263 / NCIMB 8327) (Chlorobium vibrioforme subsp. thiosulfatophilum), this protein is S-adenosylmethionine synthase.